Reading from the N-terminus, the 1071-residue chain is MADLSSVDEFLNQCKQSGDAAYGALRSVLERLEDPNTRSKARIFLSDIYKRVGSSETSLQTYHFHIQDIYLDQYEGFQSRKKLTMMVIPSIFIPEDWSFTFYEGLNRHPDTIFKDKTVSELGCGNGWISIAIAAKWLPSKVYGLDINPRAVKISWINLYLNALDDNGEPVYDEEKKTLLDRVEFYESDLLGYCRDNKIQLERIVGCIPQILNPNPEAMSKLITENASEEFLHSLSNYCALQGFVEDQFGLGLIARAVEEGISVIKPAGIMIFNMGGRPGQGVCRRLFERRGVRVTQMWQTKILQAADTDISALVEIERSSPHRFEFFMGLSGDQPICARTAWAYGKAGGRISHALSVYSCQIRQPNLVKIIFDFLKNGFQEISNSLDLSFEDETVADEKIPFLAYLASVLKNSSYFPFEPPAGSKRFCSLIAGFMRTYHRIPINQDNIVVFPSRAVAIESAFRLFSPRLAIVDEHLTRQLPRSWLTSLAIEDTSMDKSDDQITVIESPHQSDLMIELIKKLKPQVVVTGMAPFEVITSSSFLHLLEVTKEIGCRLFLDISDHFELSSLPASNGVLKYLAENQLPSHAAIICGLVKNKVYSDLEVAFVITEVDAIAKALSKTVEVLEGHTAIISQYYYGCLFHELLAFQLADRHAPAERESEKAKSEEIIGFSSSAVSILKDAELSVTEIDETSLIHMDVDQSFLQIPQSVKAAIFESFVRQNISEAEVDINPSIKQFVWSNYGFPTKSSTGFVYADGSLALFNKLVICCAQEGGTLCLPAGTNGNYVAAAKFLKANVVNIPTESSDGFKLTEKTLTKALESVKKPWVCISGPTVSPTGLVYSNEEMDILLSTCAKFGAKVIIDTSFSGLEYSATSWDLKNALSKMDSSLSVSLLGCLSLNLLSGAIKLGFLVLDQSLIDAFHTLPGLSKPHSTVKYAAKKMLALKEEKASDFLDAVSETIKTLEGRSRRLKEVLQNSGWEVIQPSAGISMVAKPKAYLNKKVKLKAGDGQEIVELTDSNMRDVFLSHTGVCLNSGSWTGIPGYCRFSFALEDSEFDKAIESIAQFKSVLAN.

An N-acetylalanine modification is found at Ala2.

This sequence belongs to the class I-like SAM-binding methyltransferase superfamily. In terms of assembly, homotetramer. Expressed in roots, rosette leaves and cauline leaves. Expressed at a lower level in developing seeds.

Its subcellular location is the cytoplasm. It carries out the reaction L-methionine + S-adenosyl-L-methionine = S-methyl-L-methionine + S-adenosyl-L-homocysteine. Functionally, catalyzes the S-methylmethionine (SMM) biosynthesis from adenosyl-L-homocysteine (AdoMet) and methionine. SMM biosynthesis (by MMT1) and degradation (by HMT-1, HMT-2 and HMT-3) constitute the SMM cycle in plants, which is probably required to achieve short term control of AdoMet level. Also able to catalyze the selenium-methylmethionine (SeMM) from AdoMet and selenium-methionine (SeMet). May play a role in phoem sulfur transport; such function is however not essential. This is Methionine S-methyltransferase (MMT1) from Arabidopsis thaliana (Mouse-ear cress).